A 398-amino-acid polypeptide reads, in one-letter code: Exodeoxyribonuclease 7 large subunit (398 aa).

The protein belongs to the XseA family. As to quaternary structure, heterooligomer composed of large and small subunits.

It is found in the cytoplasm. It catalyses the reaction Exonucleolytic cleavage in either 5'- to 3'- or 3'- to 5'-direction to yield nucleoside 5'-phosphates.. In terms of biological role, bidirectionally degrades single-stranded DNA into large acid-insoluble oligonucleotides, which are then degraded further into small acid-soluble oligonucleotides. The chain is Exodeoxyribonuclease 7 large subunit from Salinibacter ruber (strain DSM 13855 / M31).